A 433-amino-acid chain; its full sequence is MTSAFYGGDEVSAIVIDPGSKWTRIGFSGEDIPKCVLPSYCGEFSDGRRLFGEEYIYKSNPGMEIKNAIRNGWVENWDVTVDLWRYGLEQQLKTNPLEHPILITEPFDNPPENRVKTLETMFESLRCPATYLAKQETCAAFASGKGTACLVDIGAERSSVSAIYDGFVLQKGYQVQHFSGNAINDILAQTLRDKNFEVMPKYLVKSKNPVEIGQPANCELRPRDTTDSYHQFQVQRVYDEWKEECALISDVPFSSETTIAESEFEFPDGSRMMFGAERYQIPEHLFVPGSDEEMNEEPSKPIEQTENNEVSQQDSSVTNTSSRILGIPQLFQNCISECDVDIRASLLNNVIVCGGTSLMQGFSLRLQNELSKLYPGSRLKIHASGHVVERSYASWLGGSILSSLGTFHQLWISRQEYEEHGSDRLALIEKRCK.

A disordered region spans residues 289–317 (GSDEEMNEEPSKPIEQTENNEVSQQDSSV). Residues 302-317 (IEQTENNEVSQQDSSV) show a composition bias toward polar residues.

This sequence belongs to the actin family. ARP4 subfamily. In terms of assembly, component of the NuA4 histone acetyltransferase complex, of the INO80 chromatin remodeling complex, and of the SWR1 chromatin remodeling complex.

It is found in the nucleus. Its function is as follows. Chromatin interaction component of the NuA4 histone acetyltransferase complex which is involved in transcriptional activation of selected genes principally by acetylation of nucleosomal histone H4 and H2A. The NuA4 complex is also involved in DNA repair. Is required for NuA4 complex integrity. Component of the SWR1 complex which mediates the ATP-dependent exchange of histone H2A for the H2A variant HZT1 leading to transcriptional regulation of selected genes by chromatin remodeling. Component of the INO80 complex which remodels chromatin by shifting nucleosomes and is involved in DNA repair. The protein is Actin-related protein 4 (alp5) of Schizosaccharomyces pombe (strain 972 / ATCC 24843) (Fission yeast).